The chain runs to 179 residues: Large ribosomal subunit protein uL6 (179 aa).

This sequence belongs to the universal ribosomal protein uL6 family. In terms of assembly, part of the 50S ribosomal subunit.

In terms of biological role, this protein binds to the 23S rRNA, and is important in its secondary structure. It is located near the subunit interface in the base of the L7/L12 stalk, and near the tRNA binding site of the peptidyltransferase center. This chain is Large ribosomal subunit protein uL6, found in Acidobacterium capsulatum (strain ATCC 51196 / DSM 11244 / BCRC 80197 / JCM 7670 / NBRC 15755 / NCIMB 13165 / 161).